We begin with the raw amino-acid sequence, 729 residues long: Fatty acid oxidation complex subunit alpha (729 aa).

The enoyl-CoA hydratase/isomerase stretch occupies residues 1–189; it reads MLYKGDTLYL…KIGLVDGVVK (189 aa). D296 is a binding site for substrate. Positions 311–729 are 3-hydroxyacyl-CoA dehydrogenase; the sequence is ETPKQAAVLG…ARPVGDLKTA (419 aa). NAD(+)-binding positions include M324, D343, 400–402, K407, and S429; that span reads VVE. The active-site For 3-hydroxyacyl-CoA dehydrogenase activity is H450. N453 serves as a coordination point for NAD(+). N500 and Y660 together coordinate substrate. The segment at 707-729 is disordered; it reads ARHNEPYYPPVEPARPVGDLKTA.

The protein in the N-terminal section; belongs to the enoyl-CoA hydratase/isomerase family. It in the C-terminal section; belongs to the 3-hydroxyacyl-CoA dehydrogenase family. Heterotetramer of two alpha chains (FadB) and two beta chains (FadA).

It carries out the reaction a (3S)-3-hydroxyacyl-CoA + NAD(+) = a 3-oxoacyl-CoA + NADH + H(+). It catalyses the reaction a (3S)-3-hydroxyacyl-CoA = a (2E)-enoyl-CoA + H2O. The catalysed reaction is a 4-saturated-(3S)-3-hydroxyacyl-CoA = a (3E)-enoyl-CoA + H2O. The enzyme catalyses (3S)-3-hydroxybutanoyl-CoA = (3R)-3-hydroxybutanoyl-CoA. It carries out the reaction a (3Z)-enoyl-CoA = a 4-saturated (2E)-enoyl-CoA. It catalyses the reaction a (3E)-enoyl-CoA = a 4-saturated (2E)-enoyl-CoA. Its pathway is lipid metabolism; fatty acid beta-oxidation. In terms of biological role, involved in the aerobic and anaerobic degradation of long-chain fatty acids via beta-oxidation cycle. Catalyzes the formation of 3-oxoacyl-CoA from enoyl-CoA via L-3-hydroxyacyl-CoA. It can also use D-3-hydroxyacyl-CoA and cis-3-enoyl-CoA as substrate. The protein is Fatty acid oxidation complex subunit alpha of Escherichia coli O6:K15:H31 (strain 536 / UPEC).